The primary structure comprises 138 residues: Acidic phospholipase A2 1 (138 aa).

An N-terminal signal peptide occupies residues 1 to 16; sequence MRTLWIMAVLLVGVEG. Cystine bridges form between Cys-42/Cys-131, Cys-44/Cys-60, Cys-59/Cys-111, Cys-65/Cys-138, Cys-66/Cys-104, Cys-73/Cys-97, and Cys-91/Cys-102. Residues Phe-43, Gly-45, and Gly-47 each coordinate Ca(2+). His-63 is an active-site residue. Asp-64 lines the Ca(2+) pocket. The active site involves Asp-105.

The protein belongs to the phospholipase A2 family. Group II subfamily. D49 sub-subfamily. Ca(2+) is required as a cofactor. As to expression, expressed by the venom gland.

It is found in the secreted. It carries out the reaction a 1,2-diacyl-sn-glycero-3-phosphocholine + H2O = a 1-acyl-sn-glycero-3-phosphocholine + a fatty acid + H(+). Functionally, snake venom phospholipase A2 (PLA2) that has high lipolytic activity. PLA2 catalyzes the calcium-dependent hydrolysis of the 2-acyl groups in 3-sn-phosphoglycerides. The polypeptide is Acidic phospholipase A2 1 (Craspedocephalus gramineus (Bamboo pit viper)).